The primary structure comprises 129 residues: Protein Turandot B2 (129 aa).

A signal peptide spans 1-21 (MNSATSLMCFALLLISPLCMG).

The protein belongs to the Turandot family.

It localises to the secreted. A humoral factor that may play a role in stress tolerance. In Drosophila erecta (Fruit fly), this protein is Protein Turandot B2 (TotB2).